The primary structure comprises 223 residues: Ribonuclease HII (223 aa).

An RNase H type-2 domain is found at 32-223 (LYIAGVDEVG…LKKRYRDYMS (192 aa)). Residues aspartate 38, glutamate 39, and aspartate 130 each coordinate a divalent metal cation.

Belongs to the RNase HII family. Mn(2+) is required as a cofactor. Mg(2+) serves as cofactor.

It is found in the cytoplasm. The catalysed reaction is Endonucleolytic cleavage to 5'-phosphomonoester.. Its function is as follows. Endonuclease that specifically degrades the RNA of RNA-DNA hybrids. This Bartonella henselae (strain ATCC 49882 / DSM 28221 / CCUG 30454 / Houston 1) (Rochalimaea henselae) protein is Ribonuclease HII.